Here is a 2090-residue protein sequence, read N- to C-terminus: Dysferlin (2090 aa).

The C2 1 domain occupies Met-1 to Phe-101. The Cytoplasmic segment spans residues Met-1 to Ala-2056. Ca(2+) contacts are provided by Asp-18, Ile-19, Asp-21, and Asn-40. The disordered stretch occupies residues Val-130–Asp-217. The segment covering Gly-155–Pro-172 has biased composition (acidic residues). Gly-164 is subject to Phosphoserine. Thr-166 bears the Phosphothreonine mark. Gly-167 bears the Phosphoserine mark. Over residues Pro-188–Tyr-199 the composition is skewed to pro residues. C2 domains lie at Arg-206 to Leu-323, Asp-362 to Pro-498, Gly-1146 to Arg-1272, Pro-1320 to Pro-1448, Pro-1571 to Gly-1689, and Gly-1805 to Ser-1953. Phosphoserine is present on Ala-209. Pro-219 is modified (phosphothreonine). 9 residues coordinate Ca(2+): Asp-411, Asp-419, Asp-467, Asp-469, Asp-475, Asp-1178, Asp-1184, Asp-1240, and Asp-1242. 7 residues coordinate Ca(2+): Asp-1604, Asp-1610, Asp-1659, Asp-1661, Asp-1924, Ser-1927, and Asp-1930. Residues Ser-2005 to Asp-2027 are disordered. Residues Ile-2057–Phe-2077 traverse the membrane as a helical segment. The Extracellular segment spans residues Pro-2078–Arg-2090.

The protein belongs to the ferlin family. In terms of assembly, interacts with CAV3. Interacts with AHNAK; the interaction is direct and Ca(2+)-independent. Interacts with AHNAK2; the interaction is direct and Ca(2+)-independent. Interacts with ANXA1; the interaction is Ca(2+)- and injury state-dependent. Interacts with ANXA2; the interaction is Ca(2+)- and injury state-dependent. Interacts with CACNA1S and PARVB. Interacts with TRIM72/MG53; interaction is required for transport to sites of cell injury during repair patch formation. Interacts with RIPOR2; this interaction occurs during early myogenic differentiation. Requires Ca(2+) as cofactor. In terms of tissue distribution, expressed in skeletal and cardiac muscles (at protein level). Expressed in skeletal muscle and heart. Also found in brain, liver and kidney.

It is found in the cell membrane. It localises to the sarcolemma. The protein resides in the cytoplasmic vesicle membrane. In terms of biological role, key calcium ion sensor involved in the Ca(2+)-triggered synaptic vesicle-plasma membrane fusion. Plays a role in the sarcolemma repair mechanism of both skeletal muscle and cardiomyocytes that permits rapid resealing of membranes disrupted by mechanical stress. This is Dysferlin (Dysf) from Mus musculus (Mouse).